Reading from the N-terminus, the 199-residue chain is MIAYIKGLLAADGPGWVVIDVNGIGYHVSIPSTTQLPALGHEVKLFTHMSVREDGIQFFGFAKEDEKECFLLLLNVAGVGPKVALAVVSHLPPSNLRSAIAIEDVNQLVKVPGVGKKTAQRILLELKDKLKGMAAVEHSTLQQSVITTGSGDEAVEALLALGYSQGEARDAVKKAQKSAPEEDLSALIKIALKELAPSR.

Residues 1–62 (MIAYIKGLLA…EDGIQFFGFA (62 aa)) form a domain I region. Residues 63–141 (KEDEKECFLL…GMAAVEHSTL (79 aa)) are domain II. The interval 142 to 152 (QQSVITTGSGD) is flexible linker. The domain III stretch occupies residues 152–199 (DEAVEALLALGYSQGEARDAVKKAQKSAPEEDLSALIKIALKELAPSR).

Belongs to the RuvA family. Homotetramer. Forms an RuvA(8)-RuvB(12)-Holliday junction (HJ) complex. HJ DNA is sandwiched between 2 RuvA tetramers; dsDNA enters through RuvA and exits via RuvB. An RuvB hexamer assembles on each DNA strand where it exits the tetramer. Each RuvB hexamer is contacted by two RuvA subunits (via domain III) on 2 adjacent RuvB subunits; this complex drives branch migration. In the full resolvosome a probable DNA-RuvA(4)-RuvB(12)-RuvC(2) complex forms which resolves the HJ.

The protein localises to the cytoplasm. Functionally, the RuvA-RuvB-RuvC complex processes Holliday junction (HJ) DNA during genetic recombination and DNA repair, while the RuvA-RuvB complex plays an important role in the rescue of blocked DNA replication forks via replication fork reversal (RFR). RuvA specifically binds to HJ cruciform DNA, conferring on it an open structure. The RuvB hexamer acts as an ATP-dependent pump, pulling dsDNA into and through the RuvAB complex. HJ branch migration allows RuvC to scan DNA until it finds its consensus sequence, where it cleaves and resolves the cruciform DNA. This Desulforamulus reducens (strain ATCC BAA-1160 / DSM 100696 / MI-1) (Desulfotomaculum reducens) protein is Holliday junction branch migration complex subunit RuvA.